We begin with the raw amino-acid sequence, 258 residues long: Trans-aconitate 2-methyltransferase (258 aa).

It belongs to the methyltransferase superfamily. Tam family.

The protein localises to the cytoplasm. It carries out the reaction trans-aconitate + S-adenosyl-L-methionine = (E)-3-(methoxycarbonyl)pent-2-enedioate + S-adenosyl-L-homocysteine. Functionally, catalyzes the S-adenosylmethionine monomethyl esterification of trans-aconitate. The protein is Trans-aconitate 2-methyltransferase of Yersinia pestis bv. Antiqua (strain Antiqua).